A 623-amino-acid polypeptide reads, in one-letter code: Transketolase (623 aa).

An N-acetylmethionine modification is found at Met1. A Phosphoserine modification is found at Ser3. Residues Lys6 and Lys11 each carry the N6-acetyllysine modification. His37 provides a ligand contact to substrate. Thiamine diphosphate-binding residues include Ser40 and His77. Ser104 is subject to Phosphoserine. 123–125 (GSL) contacts thiamine diphosphate. An N6-acetyllysine modification is found at Lys144. Asp155 serves as a coordination point for Mg(2+). Positions 156 and 185 each coordinate thiamine diphosphate. Mg(2+) is bound by residues Asn185 and Leu187. N6-acetyllysine is present on residues Lys204, Lys232, and Lys241. Residues Lys244 and His258 each coordinate thiamine diphosphate. Residue His258 participates in substrate binding. Lys260 is subject to N6-acetyllysine. Tyr275 bears the Phosphotyrosine mark. At Thr287 the chain carries Phosphothreonine. Ser295 is subject to Phosphoserine. Substrate is bound by residues Arg318 and Ser345. Ser345 bears the Phosphoserine mark. Lys352 participates in a covalent cross-link: Glycyl lysine isopeptide (Lys-Gly) (interchain with G-Cter in SUMO2). The Proton donor role is filled by Glu366. Phe392 is a thiamine diphosphate binding site. Residues His416 and Asp424 each coordinate substrate. Gln428 contributes to the thiamine diphosphate binding site. Arg474 is a binding site for substrate. Lys538 and Lys603 each carry N6-acetyllysine.

This sequence belongs to the transketolase family. In terms of assembly, homodimer. Mg(2+) is required as a cofactor. Requires Ca(2+) as cofactor. The cofactor is Mn(2+). It depends on Co(2+) as a cofactor. Thiamine diphosphate serves as cofactor.

It carries out the reaction D-sedoheptulose 7-phosphate + D-glyceraldehyde 3-phosphate = aldehydo-D-ribose 5-phosphate + D-xylulose 5-phosphate. In terms of biological role, catalyzes the transfer of a two-carbon ketol group from a ketose donor to an aldose acceptor, via a covalent intermediate with the cofactor thiamine pyrophosphate. The polypeptide is Transketolase (TKT) (Homo sapiens (Human)).